Here is a 472-residue protein sequence, read N- to C-terminus: Glycine--tRNA ligase (472 aa).

2 residues coordinate substrate: R109 and E174. ATP is bound by residues 206-208 (RNE), 216-221 (FRTREF), 293-294 (EL), and 337-340 (GLTR). 221 to 225 (FEQME) contacts substrate. 333–337 (EPAAG) provides a ligand contact to substrate.

Belongs to the class-II aminoacyl-tRNA synthetase family. As to quaternary structure, homodimer.

The protein localises to the cytoplasm. The catalysed reaction is tRNA(Gly) + glycine + ATP = glycyl-tRNA(Gly) + AMP + diphosphate. In terms of biological role, catalyzes the attachment of glycine to tRNA(Gly). The protein is Glycine--tRNA ligase of Cutibacterium acnes (strain DSM 16379 / KPA171202) (Propionibacterium acnes).